A 553-amino-acid polypeptide reads, in one-letter code: Putative transport protein YidE (553 aa).

The next 5 helical transmembrane spans lie at 4–24, 28–48, 65–85, 95–115, and 158–178; these read IALT…IGNV, GIGL…HFVS, FGLI…FFAS, LFAV…HKLF, and MSYA…MWML. 2 consecutive RCK C-terminal domains span residues 191–276 and 279–361; these read QQHE…VIGQ and DTSL…VLGN. The next 5 helical transmembrane spans lie at 371–391, 394–414, 439–459, 464–484, and 533–553; these read MLPV…PVFV, FPAA…LILG, IVLF…NTLV, LSWI…VGIL, and LVMF…WSIG.

The protein belongs to the AAE transporter (TC 2.A.81) family. YidE subfamily.

The protein resides in the cell membrane. This chain is Putative transport protein YidE, found in Shigella dysenteriae serotype 1 (strain Sd197).